The following is a 426-amino-acid chain: Tol-Pal system protein TolB (426 aa).

An N-terminal signal peptide occupies residues 1-25 (MSITPSLSRRTVMSLLAAGLSPAFA).

It belongs to the TolB family. In terms of assembly, the Tol-Pal system is composed of five core proteins: the inner membrane proteins TolA, TolQ and TolR, the periplasmic protein TolB and the outer membrane protein Pal. They form a network linking the inner and outer membranes and the peptidoglycan layer.

It localises to the periplasm. Functionally, part of the Tol-Pal system, which plays a role in outer membrane invagination during cell division and is important for maintaining outer membrane integrity. In Polaromonas sp. (strain JS666 / ATCC BAA-500), this protein is Tol-Pal system protein TolB.